Here is a 501-residue protein sequence, read N- to C-terminus: Cytochrome P450 monooxygeanse terP (501 aa).

A helical transmembrane segment spans residues 2-22; it reads PSLLLSLLLLQVPIICAWLLV. Cys-441 is a binding site for heme.

It belongs to the cytochrome P450 family. It depends on heme as a cofactor.

It is found in the membrane. It participates in secondary metabolite biosynthesis. Its function is as follows. Cytochrome P450 monooxygeanse; part of the gene cluster that mediates the biosynthesis of terpendoles, indole-diterpene (IDT) mycotoxins including terpendole I, terpendole K, terpendole C, as well as the kinesin Eg5 inhibitor terpendole E. TerP has dual activity and is able to convert terpendole E to 13-desoxyterpendole I and paspaline to 13-desoxypaxilline. Terpendoles biosynthesis begins with the synthesis of geranylgeranyl diphosphate (GGPP) by a yet unidentified GGPP synthase. Condensation of indole-3-glycerol phosphate with GGPP by the prenyltransferase terC then forms 3-geranylgeranylindole (3-GGI), followed by epoxidation and cyclization of this intermediate (by the FAD-dependent monooxygeanse terM and the terpene cyclase terB) to form paspaline. The cytochrome monooxygenase terQ then hydroxylates paspalline at C-11 to yield terpendole E. The cytochrome monooxygenase terP converts terpendole E to 13-desoxyterpendole I, and terQ converts 13-desoxyterpendole I into terpendole I. TerF and terK are required for conversion of terpendole I to terpendole C which is further converted to terpendole K. This Tolypocladium album (Soil fungus) protein is Cytochrome P450 monooxygeanse terP.